Here is a 496-residue protein sequence, read N- to C-terminus: Glycerol kinase (496 aa).

Thr12 serves as a coordination point for ADP. Positions 12, 13, and 14 each coordinate ATP. Residue Thr12 coordinates sn-glycerol 3-phosphate. Arg16 is an ADP binding site. Sn-glycerol 3-phosphate contacts are provided by Arg82, Glu83, and Tyr134. Positions 82, 83, and 134 each coordinate glycerol. The residue at position 230 (His230) is a Phosphohistidine; by HPr. A sn-glycerol 3-phosphate-binding site is contributed by Asp244. The glycerol site is built by Asp244 and Gln245. Thr266 and Gly309 together coordinate ADP. 4 residues coordinate ATP: Thr266, Gly309, Gln313, and Gly410. 2 residues coordinate ADP: Gly410 and Asn414.

The protein belongs to the FGGY kinase family. Homotetramer and homodimer (in equilibrium). The phosphoenolpyruvate-dependent sugar phosphotransferase system (PTS), including enzyme I, and histidine-containing protein (HPr) are required for the phosphorylation, which leads to the activation of the enzyme.

It carries out the reaction glycerol + ATP = sn-glycerol 3-phosphate + ADP + H(+). Its pathway is polyol metabolism; glycerol degradation via glycerol kinase pathway; sn-glycerol 3-phosphate from glycerol: step 1/1. With respect to regulation, activated by phosphorylation and inhibited by fructose 1,6-bisphosphate (FBP). Its function is as follows. Key enzyme in the regulation of glycerol uptake and metabolism. Catalyzes the phosphorylation of glycerol to yield sn-glycerol 3-phosphate. This Geobacillus kaustophilus (strain HTA426) protein is Glycerol kinase.